The primary structure comprises 233 residues: uncharacterized protein (233 aa).

Disordered regions lie at residues 1–159 (MGKH…NEKL) and 181–206 (MGVKNAPKPTDDSSRLSDEKNRQDKM). A compositionally biased stretch (basic and acidic residues) spans 36 to 115 (RDRSRSPHKE…RRDDKNRLSA (80 aa)). Residues 135–148 (SSSSNTTDTASSSS) are compositionally biased toward low complexity. Positions 189 to 206 (PTDDSSRLSDEKNRQDKM) are enriched in basic and acidic residues.

This is an uncharacterized protein from Caenorhabditis elegans.